Reading from the N-terminus, the 70-residue chain is Small ribosomal subunit protein bS18 (70 aa).

Belongs to the bacterial ribosomal protein bS18 family. In terms of assembly, part of the 30S ribosomal subunit. Forms a tight heterodimer with protein bS6.

In terms of biological role, binds as a heterodimer with protein bS6 to the central domain of the 16S rRNA, where it helps stabilize the platform of the 30S subunit. This is Small ribosomal subunit protein bS18 from Salinibacter ruber (strain DSM 13855 / M31).